Reading from the N-terminus, the 367-residue chain is MLQKLVIDKLEEIEKRFEEIEGLLAKEDVISDFNKYQSLLKERAKIEEIVDKFREYKRLLKEKEDLEEMVKEEQDEDLRSLAETELEDIQEKLEKVEFELKALLLPKDPNDEKNIIMEIRAGTGGEEAALFAADLFRMYLGYAQKKGWKVEIVSSNPTGLGGFKEIIFIVEGKGAYSRLKFESGVHRVQRVPITESSGRIHTSTATVAVLPEMEEIEVEIDPKDLRIETFRSGGAGGQHVNKTESGVRITHIPSGIVVQCQDERSQHQNREKAMKVLRARLYEYYQREKENEIASQRRQQVGTGERSEKIRTYNFPQRRVTDHRINYSSFQLEEVLSGELDEFIDRLILAEKEEQIKKLFEEVGATS.

Gln-238 is modified (N5-methylglutamine).

Belongs to the prokaryotic/mitochondrial release factor family. In terms of processing, methylated by PrmC. Methylation increases the termination efficiency of RF1.

The protein localises to the cytoplasm. Its function is as follows. Peptide chain release factor 1 directs the termination of translation in response to the peptide chain termination codons UAG and UAA. This Dictyoglomus turgidum (strain DSM 6724 / Z-1310) protein is Peptide chain release factor 1.